Consider the following 293-residue polypeptide: Formamidopyrimidine-DNA glycosylase (293 aa).

Catalysis depends on Pro-2, which acts as the Schiff-base intermediate with DNA. Catalysis depends on Glu-3, which acts as the Proton donor. Lys-58 functions as the Proton donor; for beta-elimination activity in the catalytic mechanism. DNA contacts are provided by His-104, Arg-123, and Arg-166. The FPG-type zinc-finger motif lies at 257–293; the sequence is KVYDREGEPCPTLRCKGHVQRIVQAGRSTFFCATCQR. Arg-283 (proton donor; for delta-elimination activity) is an active-site residue.

This sequence belongs to the FPG family. In terms of assembly, monomer. It depends on Zn(2+) as a cofactor.

The enzyme catalyses Hydrolysis of DNA containing ring-opened 7-methylguanine residues, releasing 2,6-diamino-4-hydroxy-5-(N-methyl)formamidopyrimidine.. It catalyses the reaction 2'-deoxyribonucleotide-(2'-deoxyribose 5'-phosphate)-2'-deoxyribonucleotide-DNA = a 3'-end 2'-deoxyribonucleotide-(2,3-dehydro-2,3-deoxyribose 5'-phosphate)-DNA + a 5'-end 5'-phospho-2'-deoxyribonucleoside-DNA + H(+). Its function is as follows. Involved in base excision repair of DNA damaged by oxidation or by mutagenic agents. Acts as a DNA glycosylase that recognizes and removes damaged bases. Has a preference for oxidized purines, such as 7,8-dihydro-8-oxoguanine (8-oxoG). Has AP (apurinic/apyrimidinic) lyase activity and introduces nicks in the DNA strand. Cleaves the DNA backbone by beta-delta elimination to generate a single-strand break at the site of the removed base with both 3'- and 5'-phosphates. The chain is Formamidopyrimidine-DNA glycosylase from Azorhizobium caulinodans (strain ATCC 43989 / DSM 5975 / JCM 20966 / LMG 6465 / NBRC 14845 / NCIMB 13405 / ORS 571).